Reading from the N-terminus, the 664-residue chain is DNA ligase (664 aa).

NAD(+) contacts are provided by residues 34 to 38 (DAEYD), 83 to 84 (SL), and glutamate 114. Lysine 116 acts as the N6-AMP-lysine intermediate in catalysis. Positions 137, 172, 288, and 312 each coordinate NAD(+). Residues cysteine 406, cysteine 409, cysteine 424, and cysteine 429 each coordinate Zn(2+). Residues 586 to 664 (VRDNRLEGLT…EEEFRQMVMS (79 aa)) enclose the BRCT domain.

Belongs to the NAD-dependent DNA ligase family. LigA subfamily. Requires Mg(2+) as cofactor. The cofactor is Mn(2+).

The catalysed reaction is NAD(+) + (deoxyribonucleotide)n-3'-hydroxyl + 5'-phospho-(deoxyribonucleotide)m = (deoxyribonucleotide)n+m + AMP + beta-nicotinamide D-nucleotide.. DNA ligase that catalyzes the formation of phosphodiester linkages between 5'-phosphoryl and 3'-hydroxyl groups in double-stranded DNA using NAD as a coenzyme and as the energy source for the reaction. It is essential for DNA replication and repair of damaged DNA. This Carboxydothermus hydrogenoformans (strain ATCC BAA-161 / DSM 6008 / Z-2901) protein is DNA ligase.